We begin with the raw amino-acid sequence, 533 residues long: Acid-sensing ion channel 3 (533 aa).

Over 1-19 (MKPRSGLEEAQRRQASDIR) the chain is Cytoplasmic. A helical membrane pass occupies residues 20 to 40 (VFASSCTMHGLGHIFGPGGLT). At T40 the chain carries Phosphothreonine; by PKC. Residues 41-435 (LRRGLWATAV…EQKAAYEVSE (395 aa)) are Extracellular-facing. Disulfide bonds link C93–C187, C165–C172, C283–C372, C317–C368, C321–C366, C330–C352, and C332–C344. N176 carries N-linked (GlcNAc...) asparagine glycosylation. The segment at 286 to 310 (ASLDPDDFDPEPSDPLGSPRPRPSP) is disordered. N400 carries N-linked (GlcNAc...) asparagine glycosylation. The chain crosses the membrane as a helical span at residues 436-456 (LLGDIGGQMGLFIGASLLTIL). The GAS motif; ion selectivity filter signature appears at 449–451 (GAS). At 457–533 (EILDYLCEVF…HRTCYLVTRL (77 aa)) the chain is on the cytoplasmic side. The residue at position 523 (S523) is a Phosphoserine; by PKC. Residues 530–533 (VTRL) carry the PDZ-binding motif.

It belongs to the amiloride-sensitive sodium channel (TC 1.A.6) family. ASIC3 subfamily. As to quaternary structure, can form homotrimeric channels. Heterotrimer; forms functional heterotrimers producing channel with different properties. Forms heterotrimers with ASIC2; gives rise to a biphasic current with a sustained current which discriminates poorly between Na(+) and K(+). Interacts with STOM; inhibits ASIC3 acid-evoked current. Interacts with LIN7B (via PDZ domain); increases ASIC3 expression at the plasma membrane. Interacts with MAGI1 (via PDZ domain); probably regulates ASIC3. Interacts with GOPC (via PDZ domain); probably regulates ASIC3. Interacts with DLG4 (via PDZ domain); reduces ASIC3 expression at the plasma membrane. Post-translationally, could be phosphorylated by PKC, promoting activation of ASIC2/ASIC3 heterotrimers. In terms of tissue distribution, expressed in sciatic nerve and dorsal root ganglion (at protein level). Expressed in sensory neurons of dorsal root ganglion. Expressed in Golgi interneurons in the granular layer. Also found in superior cervical ganglia, spinal cord and brain stem.

It localises to the cell membrane. Its subcellular location is the cytoplasm. It carries out the reaction Na(+)(in) = Na(+)(out). The catalysed reaction is K(+)(in) = K(+)(out). It catalyses the reaction Ca(2+)(in) = Ca(2+)(out). Its activity is regulated as follows. Inhibited by the diuretic drug amiloride. Inhibited by gadolinium ions. Inhibited by extracellular Ca(2+). Activated by lactate. Salicylic acid, diclofenac and aspirin inhibit the sustained current component. Activated by the vertebrate neuropeptides NPFF and NPSF, and the related FMRFamide. Specifically and reversibly inhibited by the a sea anemone toxin APETx2. ASIC3-containing channels are potentiated by the cono-RFamide CNF-Tx1.1, and probably CNF-Tx1.2 and CNF-Tx1.3 (AC P0DL71). Functionally, forms pH-gated heterotrimeric sodium channels that act as postsynaptic excitatory receptors in the nervous system. Upon extracellular acidification, these channels generate a biphasic current with a fast inactivating and a slow sustained phase. ASIC3 is more sensitive to protons and gates between closed, open, and desensitized states faster than other ASICs. Displays high selectivity for sodium ions but can also permit the permeation of other cations. As a neuronal acid sensor, probably contributes to mechanoreception, acid nociception, and heat nociception. By forming heterotrimeric channels with ASIC2, generates a biphasic current with a fast inactivating and a slow sustained phase, which in sensory neurons is proposed to mediate the pain induced by acidosis that occurs in ischemic, damaged or inflamed tissues. This is Acid-sensing ion channel 3 from Rattus norvegicus (Rat).